Consider the following 297-residue polypeptide: N-acetylmuramic acid 6-phosphate etherase (297 aa).

Positions 55–218 constitute an SIS domain; it reads AAAALKSGGR…STGAMVKFGK (164 aa). E83 functions as the Proton donor in the catalytic mechanism. The active site involves E114.

Belongs to the GCKR-like family. MurNAc-6-P etherase subfamily. As to quaternary structure, homodimer.

The catalysed reaction is N-acetyl-D-muramate 6-phosphate + H2O = N-acetyl-D-glucosamine 6-phosphate + (R)-lactate. It functions in the pathway amino-sugar metabolism; 1,6-anhydro-N-acetylmuramate degradation. Its pathway is amino-sugar metabolism; N-acetylmuramate degradation. It participates in cell wall biogenesis; peptidoglycan recycling. Its function is as follows. Specifically catalyzes the cleavage of the D-lactyl ether substituent of MurNAc 6-phosphate, producing GlcNAc 6-phosphate and D-lactate. Together with AnmK, is also required for the utilization of anhydro-N-acetylmuramic acid (anhMurNAc) either imported from the medium or derived from its own cell wall murein, and thus plays a role in cell wall recycling. The protein is N-acetylmuramic acid 6-phosphate etherase of Salmonella agona (strain SL483).